The chain runs to 399 residues: Exodeoxyribonuclease 7 large subunit (399 aa).

This sequence belongs to the XseA family. In terms of assembly, heterooligomer composed of large and small subunits.

The protein localises to the cytoplasm. It catalyses the reaction Exonucleolytic cleavage in either 5'- to 3'- or 3'- to 5'-direction to yield nucleoside 5'-phosphates.. In terms of biological role, bidirectionally degrades single-stranded DNA into large acid-insoluble oligonucleotides, which are then degraded further into small acid-soluble oligonucleotides. The protein is Exodeoxyribonuclease 7 large subunit of Clostridium acetobutylicum (strain ATCC 824 / DSM 792 / JCM 1419 / IAM 19013 / LMG 5710 / NBRC 13948 / NRRL B-527 / VKM B-1787 / 2291 / W).